The primary structure comprises 518 residues: Serine incorporator 4 (518 aa).

The next 10 helical transmembrane spans lie at 59–79, 122–142, 153–173, 184–204, 222–242, 259–279, 286–306, 338–357, 427–447, and 470–490; these read CSRL…CLLL, VCAG…HLHS, SFWL…FCIP, IGIC…TAFA, FLAV…GAVL, LLSL…APCI, SGLL…FSAL, ISLA…FACN, AFHF…TNWF, and VASC…PLCW.

This sequence belongs to the TDE1 family.

It localises to the membrane. Its function is as follows. Incorporates a polar amino acid serine into membranes and facilitates the synthesis of two serine-derived lipids, phosphatidylserine and sphingolipids. This chain is Serine incorporator 4 (SERINC4), found in Homo sapiens (Human).